A 947-amino-acid polypeptide reads, in one-letter code: Leucine-rich repeat-containing protein 37B (947 aa).

A signal peptide spans 1-27 (MSWLRFWGPWPLLTWQLLSLLVKEAQP). Topologically, residues 28–905 (LVWVKDPLQL…EVPGDDYKNK (878 aa)) are extracellular. 4 disordered regions span residues 42-88 (LGPP…ALPQ), 226-257 (YLSMDTLYPGSLPPELRVNADEPPGPPEQVGL), 294-458 (EVEP…PEPT), and 484-514 (SLTEVTGPPTKLESSQDSLVQSETAPEEQKA). Residues 311–320 (SMESLAQTPL) are compositionally biased toward polar residues. Asn-358 is a glycosylation site (N-linked (GlcNAc...) asparagine). 3 stretches are compositionally biased toward polar residues: residues 404 to 415 (GQAQHSHLTEAT), 436 to 445 (SPTTEETSAQ), and 495 to 507 (LESSQDSLVQSET). LRR repeat units follow at residues 556-577 (IFTTLNFQGNYISYLDGNVWKA), 580-601 (WTEKLILSENYLTELPKDSFEG), 604-625 (YLQYLDLSCNKIRYIERQTFES), 628-649 (FLQYINLGCNLITKLSLGTFQA), 655-676 (FLHNLILNRNPLTTVEDPYLFE), and 679-699 (ALKYLDMGTTHITLTTLKNIL). The N-linked (GlcNAc...) asparagine glycan is linked to Asn-789. A coiled-coil region spans residues 867 to 897 (DTDQQKTNYINENMEQNEQKEQKSSELMKEV). The helical transmembrane segment at 906 to 926 (LIFAISVTVILIILIIIFCLI) threads the bilayer. At 927–947 (EVNSHKRASEKYKDNPSISGA) the chain is on the cytoplasmic side.

It is found in the membrane. The polypeptide is Leucine-rich repeat-containing protein 37B (LRRC37B) (Homo sapiens (Human)).